The chain runs to 728 residues: Catalase-peroxidase (728 aa).

The segment at 1–26 is disordered; sequence MDNPTDTAGKCPVAHGNKPRGPSNRD. The tryptophyl-tyrosyl-methioninium (Trp-Tyr) (with M-244) cross-link spans 96–218; it reads WHSAGTYRIT…LGAVQMGLIY (123 aa). Histidine 97 serves as the catalytic Proton acceptor. Residues 218–244 constitute a cross-link (tryptophyl-tyrosyl-methioninium (Tyr-Met) (with W-96)); the sequence is YVNPEGPGGNPDPLASARDIRETFARM. Histidine 259 is a heme b binding site.

This sequence belongs to the peroxidase family. Peroxidase/catalase subfamily. Homodimer or homotetramer. Requires heme b as cofactor. In terms of processing, formation of the three residue Trp-Tyr-Met cross-link is important for the catalase, but not the peroxidase activity of the enzyme.

It catalyses the reaction H2O2 + AH2 = A + 2 H2O. The catalysed reaction is 2 H2O2 = O2 + 2 H2O. Its function is as follows. Bifunctional enzyme with both catalase and broad-spectrum peroxidase activity. The protein is Catalase-peroxidase of Rhizobium etli (strain CIAT 652).